Reading from the N-terminus, the 595-residue chain is O-phosphoseryl-tRNA(Sec) selenium transferase (595 aa).

Arginine 75 is a pyridoxal 5'-phosphate binding site. The segment at 96 to 106 (GRSGDLFSEQP) is phosphate loop (P-loop). Substrate contacts are provided by arginine 97, serine 98, and glutamine 105. The span at 174-187 (RTVTKDSTSATSAA) shows a compositional bias: polar residues. 2 disordered regions span residues 174–208 (RTVT…TSLP) and 257–278 (STNR…TPTS). Positions 196–205 (EADRDRHDRT) are enriched in basic and acidic residues. Arginine 358 is a binding site for tRNA. Residue lysine 371 is modified to N6-(pyridoxal phosphate)lysine. Position 400 (arginine 400) interacts with substrate.

Belongs to the SepSecS family. As to quaternary structure, homotetramer composed of two homodimers. Pyridoxal 5'-phosphate is required as a cofactor.

It is found in the cytoplasm. It carries out the reaction O-phospho-L-seryl-tRNA(Sec) + selenophosphate + H2O = L-selenocysteinyl-tRNA(Sec) + 2 phosphate. The protein operates within aminoacyl-tRNA biosynthesis; selenocysteinyl-tRNA(Sec) biosynthesis; selenocysteinyl-tRNA(Sec) from L-seryl-tRNA(Sec) (archaeal/eukaryal route): step 2/2. Converts O-phosphoseryl-tRNA(Sec) to selenocysteinyl-tRNA(Sec) required for selenoprotein biosynthesis. In Leishmania donovani, this protein is O-phosphoseryl-tRNA(Sec) selenium transferase.